The sequence spans 420 residues: Glutamate-1-semialdehyde 2,1-aminomutase (420 aa).

Lysine 259 carries the N6-(pyridoxal phosphate)lysine modification.

This sequence belongs to the class-III pyridoxal-phosphate-dependent aminotransferase family. HemL subfamily. It depends on pyridoxal 5'-phosphate as a cofactor.

It localises to the cytoplasm. It catalyses the reaction (S)-4-amino-5-oxopentanoate = 5-aminolevulinate. Its pathway is porphyrin-containing compound metabolism; protoporphyrin-IX biosynthesis; 5-aminolevulinate from L-glutamyl-tRNA(Glu): step 2/2. In Sulfolobus acidocaldarius (strain ATCC 33909 / DSM 639 / JCM 8929 / NBRC 15157 / NCIMB 11770), this protein is Glutamate-1-semialdehyde 2,1-aminomutase.